We begin with the raw amino-acid sequence, 657 residues long: Protein mono-ADP-ribosyltransferase TIPARP (657 aa).

Residues 1–10 (MEVETTEPEP) are compositionally biased toward acidic residues. A disordered region spans residues 1-22 (MEVETTEPEPDCVVQPPSPSDD). Position 39 is an ADP-ribosylcysteine (Cys-39). Positions 41 to 48 (KKKQEQKR) match the Nuclear localization signal motif. The segment at 121–154 (QLPEAHPSTDAPEQGVPIQDHSFPPETISGTVAD) is disordered. The C3H1-type zinc-finger motif lies at 238–265 (ENGIEICMDFLQGTCIYGRDCLKHHTVL). Positions 333 to 411 (STPPCSNSNS…RRPLFRSCFI (79 aa)) constitute a WWE domain. Positions 449 to 657 (YPETWVYMHP…YEEVSNTVSI (209 aa)) constitute a PARP catalytic domain.

Belongs to the ARTD/PARP family. In terms of assembly, interacts with AHR. In terms of processing, auto-mono-ADP-ribosylated. As to expression, ubiquitously expressed.

Its subcellular location is the nucleus. The catalysed reaction is L-aspartyl-[protein] + NAD(+) = 4-O-(ADP-D-ribosyl)-L-aspartyl-[protein] + nicotinamide. The enzyme catalyses L-glutamyl-[protein] + NAD(+) = 5-O-(ADP-D-ribosyl)-L-glutamyl-[protein] + nicotinamide. It carries out the reaction L-cysteinyl-[protein] + NAD(+) = S-(ADP-D-ribosyl)-L-cysteinyl-[protein] + nicotinamide + H(+). Its function is as follows. ADP-ribosyltransferase that mediates mono-ADP-ribosylation of glutamate, aspartate and cysteine residues on target proteins. Acts as a negative regulator of AHR by mediating mono-ADP-ribosylation of AHR, leading to inhibit transcription activator activity of AHR. In Mus musculus (Mouse), this protein is Protein mono-ADP-ribosyltransferase TIPARP.